Here is a 61-residue protein sequence, read N- to C-terminus: Small ribosomal subunit protein uS14 (61 aa).

C24, C27, C40, and C43 together coordinate Zn(2+).

This sequence belongs to the universal ribosomal protein uS14 family. Zinc-binding uS14 subfamily. In terms of assembly, part of the 30S ribosomal subunit. Contacts proteins S3 and S10. It depends on Zn(2+) as a cofactor.

Binds 16S rRNA, required for the assembly of 30S particles and may also be responsible for determining the conformation of the 16S rRNA at the A site. This is Small ribosomal subunit protein uS14 from Desulfovibrio desulfuricans (strain ATCC 27774 / DSM 6949 / MB).